The primary structure comprises 201 residues: Rac-like GTP-binding protein ARAC2 (201 aa).

Residue 13–20 (GDGAVGKT) coordinates GTP. The Effector region signature appears at 35–43 (YVPTVFDNF). Residues 60-64 (DTAGQ) and 118-121 (TKLD) each bind GTP. The residue at position 198 (cysteine 198) is a Cysteine methyl ester. Residue cysteine 198 is the site of S-geranylgeranyl cysteine attachment. Residues 199–201 (FFL) constitute a propeptide, removed in mature form.

Belongs to the small GTPase superfamily. Rho family. Expressed exclusively in the root, hypocotyl and stem.

The protein resides in the cytoplasm. It is found in the membrane. Functionally, inactive GDP-bound Rho GTPases reside in the cytosol, are found in a complex with Rho GDP-dissociation inhibitors (Rho GDIs), and are released from the GDI protein in order to translocate to membranes upon activation. In Arabidopsis thaliana (Mouse-ear cress), this protein is Rac-like GTP-binding protein ARAC2 (ARAC2).